A 537-amino-acid polypeptide reads, in one-letter code: Light-independent protochlorophyllide reductase subunit B (537 aa).

Aspartate 36 provides a ligand contact to [4Fe-4S] cluster. The Proton donor role is filled by aspartate 292. Residue 428–429 (GL) coordinates substrate. The disordered stretch occupies residues 459 to 483 (TAGETAGQATEAATAPATPGAPLTG).

The protein belongs to the ChlB/BchB/BchZ family. As to quaternary structure, protochlorophyllide reductase is composed of three subunits; BchL, BchN and BchB. Forms a heterotetramer of two BchB and two BchN subunits. [4Fe-4S] cluster is required as a cofactor.

It catalyses the reaction chlorophyllide a + oxidized 2[4Fe-4S]-[ferredoxin] + 2 ADP + 2 phosphate = protochlorophyllide a + reduced 2[4Fe-4S]-[ferredoxin] + 2 ATP + 2 H2O. It participates in porphyrin-containing compound metabolism; bacteriochlorophyll biosynthesis (light-independent). Component of the dark-operative protochlorophyllide reductase (DPOR) that uses Mg-ATP and reduced ferredoxin to reduce ring D of protochlorophyllide (Pchlide) to form chlorophyllide a (Chlide). This reaction is light-independent. The NB-protein (BchN-BchB) is the catalytic component of the complex. This Chloroherpeton thalassium (strain ATCC 35110 / GB-78) protein is Light-independent protochlorophyllide reductase subunit B.